The sequence spans 589 residues: Mini-chromosome maintenance complex-binding protein (589 aa).

The tract at residues 163 to 211 (VDEEMTDSMDSSTLEAGRNGSPFKKMKVGEATSSASESQVPQTSGIPPA) is disordered. Over residues 193 to 207 (ATSSASESQVPQTSG) the composition is skewed to polar residues.

This sequence belongs to the MCMBP family. In terms of assembly, interacts with the MCM complex.

Its subcellular location is the nucleus. Functionally, associated component of the MCM complex that acts as a regulator of DNA replication. Binds to the MCM complex during late S phase and may act by promoting the disassembly of the MCM complex from chromatin. Required for sister chromatid cohesion. The sequence is that of Mini-chromosome maintenance complex-binding protein (ETG1) from Arabidopsis thaliana (Mouse-ear cress).